Here is a 286-residue protein sequence, read N- to C-terminus: uncharacterized protein (286 aa).

A disordered region spans residues 152-182 (YPSTTTSVTPGKKGEKTTKVDGFSSPLNQDT). The chain crosses the membrane as a helical span at residues 198 to 218 (VLIAVTLFVSGIAITVFVIFE). The segment at 239–278 (RRPRKEDQQPGTAESQSDTQPKKVGQEAPNSSSPKKAVEI) is disordered. Over residues 247–257 (QPGTAESQSDT) the composition is skewed to polar residues.

The protein localises to the membrane. This is an uncharacterized protein from Bos taurus (Bovine).